The sequence spans 73 residues: Putative sodium channel toxin Ts39 (73 aa).

An N-terminal signal peptide occupies residues 1-22 (MKTLNFCLFLVIISSLTVRVFC). One can recognise an LCN-type CS-alpha/beta domain in the interval 24 to 73 (NDRFLTVNDNYVICLYINKSFVNCENLCKAYMNAKDGFCRQPHCFCTDVE). Disulfide bonds link Cys-37/Cys-62, Cys-47/Cys-67, and Cys-51/Cys-69.

This sequence belongs to the long (3 C-C) scorpion toxin superfamily. Sodium channel inhibitor family. As to expression, expressed by the venom gland.

It localises to the secreted. Functionally, putative sodium channel toxin. In Tityus serrulatus (Brazilian scorpion), this protein is Putative sodium channel toxin Ts39.